We begin with the raw amino-acid sequence, 663 residues long: UvrABC system protein B (663 aa).

Basic and acidic residues predominate over residues 1 to 10 (MIDKRDDKPF). The tract at residues 1-23 (MIDKRDDKPFKLKSKYKPSGDQP) is disordered. The 388-residue stretch at 31–418 (DNIEGGEKAQ…TNTIIEQIIR (388 aa)) folds into the Helicase ATP-binding domain. 44–51 (GATGTGKT) contributes to the ATP binding site. Positions 97–120 (YYDYYQPEAYVPSSDTYIEKDSSV) match the Beta-hairpin motif. One can recognise a Helicase C-terminal domain in the interval 435 to 601 (QMDDLLGEIN…TIKKDIRGLI (167 aa)). Residues 627 to 662 (KEAINALQKQMQEAAELLDFELAAQMRDLILELKLM) enclose the UVR domain.

It belongs to the UvrB family. Forms a heterotetramer with UvrA during the search for lesions. Interacts with UvrC in an incision complex.

It is found in the cytoplasm. In terms of biological role, the UvrABC repair system catalyzes the recognition and processing of DNA lesions. A damage recognition complex composed of 2 UvrA and 2 UvrB subunits scans DNA for abnormalities. Upon binding of the UvrA(2)B(2) complex to a putative damaged site, the DNA wraps around one UvrB monomer. DNA wrap is dependent on ATP binding by UvrB and probably causes local melting of the DNA helix, facilitating insertion of UvrB beta-hairpin between the DNA strands. Then UvrB probes one DNA strand for the presence of a lesion. If a lesion is found the UvrA subunits dissociate and the UvrB-DNA preincision complex is formed. This complex is subsequently bound by UvrC and the second UvrB is released. If no lesion is found, the DNA wraps around the other UvrB subunit that will check the other stand for damage. This chain is UvrABC system protein B, found in Streptococcus pyogenes serotype M28 (strain MGAS6180).